Consider the following 189-residue polypeptide: Ras-like protein 1 (189 aa).

10–17 is a GTP binding site; that stretch reads GAGGVGKS. The short motif at 32-40 is the Effector region element; the sequence is YDPTIEDSY. Residues 57–61 and 116–119 contribute to the GTP site; these read DTAGQ and NKCD. Cysteine methyl ester is present on Cys186. Residue Cys186 is the site of S-geranylgeranyl cysteine attachment. Positions 187-189 are cleaved as a propeptide — removed in mature form; it reads KML.

The protein belongs to the small GTPase superfamily. Ras family.

The protein resides in the cell membrane. The catalysed reaction is GTP + H2O = GDP + phosphate + H(+). With respect to regulation, alternates between an inactive form bound to GDP and an active form bound to GTP. Activated by a guanine nucleotide-exchange factor (GEF) and inactivated by a GTPase-activating protein (GAP). Its function is as follows. Ras proteins bind GDP/GTP and possess intrinsic GTPase activity. Plays a role in eye development by regulating cell growth, survival of postmitotic ommatidial cells and differentiation of photoreceptor cells. During larval development, mediates Ptth/tor signaling leading to the production of ecdysone, a hormone required for the initiation of metamorphosis. This is Ras-like protein 1 from Drosophila willistoni (Fruit fly).